The primary structure comprises 705 residues: Elongation factor G (705 aa).

A tr-type G domain is found at 8 to 294; sequence NLYRNFGIMA…AVIDYLPSPL (287 aa). GTP is bound by residues 17-24, 92-96, and 146-149; these read AHIDAGKT, DTPGH, and NKMD.

Belongs to the TRAFAC class translation factor GTPase superfamily. Classic translation factor GTPase family. EF-G/EF-2 subfamily.

Its subcellular location is the cytoplasm. Functionally, catalyzes the GTP-dependent ribosomal translocation step during translation elongation. During this step, the ribosome changes from the pre-translocational (PRE) to the post-translocational (POST) state as the newly formed A-site-bound peptidyl-tRNA and P-site-bound deacylated tRNA move to the P and E sites, respectively. Catalyzes the coordinated movement of the two tRNA molecules, the mRNA and conformational changes in the ribosome. The chain is Elongation factor G from Ruegeria pomeroyi (strain ATCC 700808 / DSM 15171 / DSS-3) (Silicibacter pomeroyi).